Reading from the N-terminus, the 93-residue chain is CRISPR-associated endoribonuclease Cas2 (93 aa).

Position 13 (aspartate 13) interacts with Mg(2+).

Belongs to the CRISPR-associated endoribonuclease Cas2 protein family. Homodimer, forms a heterotetramer with a Cas1 homodimer. Requires Mg(2+) as cofactor.

Functionally, CRISPR (clustered regularly interspaced short palindromic repeat), is an adaptive immune system that provides protection against mobile genetic elements (viruses, transposable elements and conjugative plasmids). CRISPR clusters contain sequences complementary to antecedent mobile elements and target invading nucleic acids. CRISPR clusters are transcribed and processed into CRISPR RNA (crRNA). Functions as a ssRNA-specific endoribonuclease. Involved in the integration of spacer DNA into the CRISPR cassette. This is CRISPR-associated endoribonuclease Cas2 from Korarchaeum cryptofilum (strain OPF8).